A 550-amino-acid chain; its full sequence is CTP synthase (550 aa).

Positions 1 to 267 are amidoligase domain; the sequence is MKTKFIFITG…DQKIAIMLRL (267 aa). Ser-14 is a CTP binding site. Ser-14 contributes to the UTP binding site. ATP-binding positions include 15 to 20 and Asp-72; that span reads SLGKGL. 2 residues coordinate Mg(2+): Asp-72 and Glu-141. CTP-binding positions include 148–150, 188–193, and Lys-224; these read DIE and KTKPTQ. Residues 188–193 and Lys-224 contribute to the UTP site; that span reads KTKPTQ. Residues 292-545 enclose the Glutamine amidotransferase type-1 domain; sequence TIGIVGKYVD…IKAAKKEAMG (254 aa). Gly-354 provides a ligand contact to L-glutamine. The active-site Nucleophile; for glutamine hydrolysis is Cys-381. L-glutamine-binding positions include 382–385, Glu-405, and Arg-473; that span reads LGMQ. Active-site residues include His-518 and Glu-520.

This sequence belongs to the CTP synthase family. As to quaternary structure, homotetramer.

The enzyme catalyses UTP + L-glutamine + ATP + H2O = CTP + L-glutamate + ADP + phosphate + 2 H(+). It catalyses the reaction L-glutamine + H2O = L-glutamate + NH4(+). The catalysed reaction is UTP + NH4(+) + ATP = CTP + ADP + phosphate + 2 H(+). Its pathway is pyrimidine metabolism; CTP biosynthesis via de novo pathway; CTP from UDP: step 2/2. Its activity is regulated as follows. Allosterically activated by GTP, when glutamine is the substrate; GTP has no effect on the reaction when ammonia is the substrate. The allosteric effector GTP functions by stabilizing the protein conformation that binds the tetrahedral intermediate(s) formed during glutamine hydrolysis. Inhibited by the product CTP, via allosteric rather than competitive inhibition. Functionally, catalyzes the ATP-dependent amination of UTP to CTP with either L-glutamine or ammonia as the source of nitrogen. Regulates intracellular CTP levels through interactions with the four ribonucleotide triphosphates. The protein is CTP synthase of Nitratidesulfovibrio vulgaris (strain DSM 19637 / Miyazaki F) (Desulfovibrio vulgaris).